The primary structure comprises 332 residues: Serpentine receptor class gamma-3 (332 aa).

The next 7 membrane-spanning stretches (helical) occupy residues 23–43 (FAYL…IWVS), 72–92 (LIFT…SEIV), 101–121 (IYYC…IFIA), 144–164 (IMLI…LISD), 184–204 (WASL…ITMV), 231–251 (AALI…FAFF), and 263–283 (YLRF…LLLV).

The protein belongs to the nematode receptor-like protein srg family.

It is found in the membrane. The chain is Serpentine receptor class gamma-3 (srg-3) from Caenorhabditis elegans.